A 114-amino-acid polypeptide reads, in one-letter code: Putative pterin-4-alpha-carbinolamine dehydratase (114 aa).

This sequence belongs to the pterin-4-alpha-carbinolamine dehydratase family.

It catalyses the reaction (4aS,6R)-4a-hydroxy-L-erythro-5,6,7,8-tetrahydrobiopterin = (6R)-L-erythro-6,7-dihydrobiopterin + H2O. The sequence is that of Putative pterin-4-alpha-carbinolamine dehydratase from Methylococcus capsulatus (strain ATCC 33009 / NCIMB 11132 / Bath).